Consider the following 757-residue polypeptide: NAD(P)H-quinone oxidoreductase subunit 5, chloroplastic (757 aa).

A run of 17 helical transmembrane segments spans residues 9–29, 40–60, 89–109, 122–139, 147–167, 185–205, 219–239, 258–278, 280–300, 327–347, 354–374, 396–416, 425–445, 544–564, 607–627, 692–712, and 718–738; these read WIIPFVPLPVTMSIGLGLLLV, WAFPSVSLLSIVMVFSADLSV, IDPLTSIMSILITTVGIMVLI, LRFFAYMSFSNTSMLGLV, IYIFWELVGMCSYLLIGFWFT, GDFGLLLGILGLYWITGSFEF, NGVNSLFATLCASLLFAGAVA, TPISALIHAATMVAAGIFLVA, LLPLFTVIPYIMNLISLIGVI, LGYIMLAPGIGSYRAALFHLI, ALLFLGSGSIIHSMEPIVGYS, MTFLLGTLSLCGIPPLACFWS, WLYSPIFAIIACATAGLTAFY, LLPLLVLVLFTLFVGFIGIPF, SIAYFGIFIASLLYGSVYLFF, GIMNGVGVSSFFVGEGIKYLG, and SYLFVYLSYVSIFLLIYIFFF.

It belongs to the complex I subunit 5 family. In terms of assembly, NDH is composed of at least 16 different subunits, 5 of which are encoded in the nucleus.

It is found in the plastid. The protein resides in the chloroplast thylakoid membrane. It carries out the reaction a plastoquinone + NADH + (n+1) H(+)(in) = a plastoquinol + NAD(+) + n H(+)(out). It catalyses the reaction a plastoquinone + NADPH + (n+1) H(+)(in) = a plastoquinol + NADP(+) + n H(+)(out). NDH shuttles electrons from NAD(P)H:plastoquinone, via FMN and iron-sulfur (Fe-S) centers, to quinones in the photosynthetic chain and possibly in a chloroplast respiratory chain. The immediate electron acceptor for the enzyme in this species is believed to be plastoquinone. Couples the redox reaction to proton translocation, and thus conserves the redox energy in a proton gradient. This Drimys granadensis protein is NAD(P)H-quinone oxidoreductase subunit 5, chloroplastic (ndhF).